The primary structure comprises 61 residues: Acetylcholinesterase toxin C (61 aa).

4 cysteine pairs are disulfide-bonded: C3/C22, C17/C39, C41/C52, and C53/C59.

The protein belongs to the three-finger toxin family. Short-chain subfamily. Acn-esterase inhibitor sub-subfamily. As to expression, expressed by the venom gland.

The protein localises to the secreted. Functionally, inhibits acetylcholinesterase. This Dendroaspis polylepis polylepis (Black mamba) protein is Acetylcholinesterase toxin C.